We begin with the raw amino-acid sequence, 786 residues long: Cadherin-9 (786 aa).

Positions 1–21 (MRTYSCLQLVIWTCIFHMVDN) are cleaved as a signal peptide. A glycan (N-linked (GlcNAc...) asparagine) is linked at Asn21. The propeptide occupies 22-52 (STLQGKDSSHFLRRIVNLKKDEGKMLHRAKR). Topologically, residues 22–614 (STLQGKDSSH…MLAAGLSTGA (593 aa)) are extracellular. Cadherin domains lie at 54–158 (WMWN…EPKF), 159–267 (TKDL…PPRF), 268–382 (PQST…PPVF), 383–487 (SKLS…APEF), and 487–604 (FATY…AEAL). Asn254 carries an N-linked (GlcNAc...) asparagine glycan. Asn454 and Asn535 each carry an N-linked (GlcNAc...) asparagine glycan. Residues 615–635 (LIAILLCVVILLTLIVLFAAL) traverse the membrane as a helical segment. At 636–786 (KRQRKKEPLI…AEMYGGNDSD (151 aa)) the chain is on the cytoplasmic side. Ser785 is modified (phosphoserine).

It localises to the cell membrane. In terms of biological role, cadherins are calcium-dependent cell adhesion proteins. They preferentially interact with themselves in a homophilic manner in connecting cells; cadherins may thus contribute to the sorting of heterogeneous cell types. This Mus musculus (Mouse) protein is Cadherin-9 (Cdh9).